Consider the following 220-residue polypeptide: Deoxyribose-phosphate aldolase (220 aa).

Asp89 serves as the catalytic Proton donor/acceptor. The Schiff-base intermediate with acetaldehyde role is filled by Lys151. The active-site Proton donor/acceptor is Lys180.

This sequence belongs to the DeoC/FbaB aldolase family. DeoC type 1 subfamily.

The protein localises to the cytoplasm. The enzyme catalyses 2-deoxy-D-ribose 5-phosphate = D-glyceraldehyde 3-phosphate + acetaldehyde. It functions in the pathway carbohydrate degradation; 2-deoxy-D-ribose 1-phosphate degradation; D-glyceraldehyde 3-phosphate and acetaldehyde from 2-deoxy-alpha-D-ribose 1-phosphate: step 2/2. Catalyzes a reversible aldol reaction between acetaldehyde and D-glyceraldehyde 3-phosphate to generate 2-deoxy-D-ribose 5-phosphate. The sequence is that of Deoxyribose-phosphate aldolase from Streptococcus uberis (strain ATCC BAA-854 / 0140J).